A 271-amino-acid chain; its full sequence is Thiazole synthase (271 aa).

Lys-104 acts as the Schiff-base intermediate with DXP in catalysis. 1-deoxy-D-xylulose 5-phosphate is bound by residues Gly-165, Ala-192–Gly-193, and Asn-214–Thr-215.

This sequence belongs to the ThiG family. In terms of assembly, homotetramer. Forms heterodimers with either ThiH or ThiS.

The protein resides in the cytoplasm. It catalyses the reaction [ThiS sulfur-carrier protein]-C-terminal-Gly-aminoethanethioate + 2-iminoacetate + 1-deoxy-D-xylulose 5-phosphate = [ThiS sulfur-carrier protein]-C-terminal Gly-Gly + 2-[(2R,5Z)-2-carboxy-4-methylthiazol-5(2H)-ylidene]ethyl phosphate + 2 H2O + H(+). It functions in the pathway cofactor biosynthesis; thiamine diphosphate biosynthesis. Its function is as follows. Catalyzes the rearrangement of 1-deoxy-D-xylulose 5-phosphate (DXP) to produce the thiazole phosphate moiety of thiamine. Sulfur is provided by the thiocarboxylate moiety of the carrier protein ThiS. In vitro, sulfur can be provided by H(2)S. The chain is Thiazole synthase from Burkholderia mallei (strain ATCC 23344).